Reading from the N-terminus, the 260-residue chain is Achaete-scute homolog 2 (260 aa).

2 disordered regions span residues 85 to 126 and 191 to 239; these read AGAC…RNER and PATR…EDSS. 2 stretches are compositionally biased toward low complexity: residues 110–121 and 200–218; these read ATEASSSSAAVA and TQPS…STSP. The region spanning 118 to 170 is the bHLH domain; it reads AAVARRNERERNRVKLVNLGFQALRQHVPHGGANKKLSKVETLRSAVEYIRAL.

In terms of assembly, efficient DNA binding requires dimerization with another bHLH protein. Forms heterodimers with bHLH transcription factor TCF3. May not heterodimerise with bHLH protein HAND1. In terms of tissue distribution, expressed in Schwann cells in the peripheral nerve (at protein level). Also expressed by endothelial cells (at protein level). May be expressed in neuronal precursor cells.

The protein resides in the nucleus. It localises to the cytoplasm. Functionally, transcription factor. Binds to E-box motifs 5'-CANNTG-3' in the regulatory elements of target genes, probably as a heterodimer with another basic helix-loop-helix (bHLH) protein such as the transcription factor TCF3. May bind both open and closed chromatin, acting as a pioneer transcription factor to allow other factors to bind and activate lineage-specific genes. Required during post-implantation development for the generation of some differentiated trophoblast cell types. Transcriptional activity of ASCL2 may be antagonised in a subset of trophoblast cells by bHLH transcription factor HAND1, perhaps by competing for dimerization with other bHLH proteins. Involved in differentiation and function of follicular T-helper (Tfh) cells, thereby playing a role in germinal center responses; probably modulates expression of genes involved in Tfh cell function, such as BCL6. May also act as a suppressor of Th1-, Th2- and Th17-cell differentiation. Induces the formation of stem cells in intestinal crypts in vitro, synergistically activating transcription of target genes, such as SOX9, together with TCF4/beta-catenin. May form a bistable transcriptional switch, controlling expression of its own gene together with Wnt/R-spondin signaling, and thereby maintaining stem cell characteristics. Modulates expression of target genes, including perhaps down-regulating EGR1/Krox24 and chemokine CXCL10/Mob-1 and up-regulating CXCR4 and CDKN1C/p57kip2, in Schwann cells. May play a role in reducing proliferation of Schwann cells, perhaps acting via modulation of expression of CDKN1C. May be dispensable for blastocyst formation and later embryonic function. May be involved in the determination of neuronal precursors. The protein is Achaete-scute homolog 2 (Ascl2) of Rattus norvegicus (Rat).